Reading from the N-terminus, the 405-residue chain is Molybdopterin molybdenumtransferase 2 (405 aa).

The protein belongs to the MoeA family. Mg(2+) serves as cofactor.

The enzyme catalyses adenylyl-molybdopterin + molybdate = Mo-molybdopterin + AMP + H(+). The protein operates within cofactor biosynthesis; molybdopterin biosynthesis. Catalyzes the insertion of molybdate into adenylated molybdopterin with the concomitant release of AMP. The protein is Molybdopterin molybdenumtransferase 2 (moaE2) of Mycobacterium tuberculosis (strain CDC 1551 / Oshkosh).